Here is a 437-residue protein sequence, read N- to C-terminus: tRNA-2-methylthio-N(6)-dimethylallyladenosine synthase (437 aa).

Residues 1–115 enclose the MTTase N-terminal domain; the sequence is MKVYIETMGC…ISQVIHKEKA (115 aa). [4Fe-4S] cluster contacts are provided by Cys10, Cys46, Cys78, Cys148, Cys152, and Cys155. The Radical SAM core domain maps to 134-367; that stretch reads KKAQIRSLLN…QNRHKEILEE (234 aa). One can recognise a TRAM domain in the interval 370 to 436; that stretch reads KLEVGKTHVV…KGRLIAAIKG (67 aa).

The protein belongs to the methylthiotransferase family. MiaB subfamily. In terms of assembly, monomer. [4Fe-4S] cluster serves as cofactor.

It localises to the cytoplasm. The enzyme catalyses N(6)-dimethylallyladenosine(37) in tRNA + (sulfur carrier)-SH + AH2 + 2 S-adenosyl-L-methionine = 2-methylsulfanyl-N(6)-dimethylallyladenosine(37) in tRNA + (sulfur carrier)-H + 5'-deoxyadenosine + L-methionine + A + S-adenosyl-L-homocysteine + 2 H(+). Its function is as follows. Catalyzes the methylthiolation of N6-(dimethylallyl)adenosine (i(6)A), leading to the formation of 2-methylthio-N6-(dimethylallyl)adenosine (ms(2)i(6)A) at position 37 in tRNAs that read codons beginning with uridine. The chain is tRNA-2-methylthio-N(6)-dimethylallyladenosine synthase from Helicobacter pylori (strain HPAG1).